Here is a 606-residue protein sequence, read N- to C-terminus: Zinc finger protein 652 (606 aa).

Serine 57 carries the phosphoserine modification. A compositionally biased stretch (basic and acidic residues) spans 71 to 97 (HLHETEEQPYFRETRAVSDVHAVKEDR). Disordered regions lie at residues 71-113 (HLHE…VSYK) and 130-235 (VSKG…APVQ). The segment covering 98 to 109 (ENSDDTEEEEEE) has biased composition (acidic residues). A Phosphoserine modification is found at serine 100. Threonine 103 carries the post-translational modification Phosphothreonine. Polar residues predominate over residues 137 to 149 (VSSQSKETPVLKT). The segment covering 152–170 (EEEEEESEEEATDDSNDYG) has biased composition (acidic residues). Residues 171–183 (ENEKQKKKEKIVE) are compositionally biased toward basic and acidic residues. The span at 184 to 209 (KVSVTQRRTRRAASVAAATTSPTPRT) shows a compositional bias: low complexity. 2 positions are modified to phosphoserine: serine 197 and serine 204. Residues 245 to 268 (LTCEKCPRVFNTRWYLEKHMNVTH) form a C2H2-type 1 zinc finger. The segment at 272–294 (QICDKCGKKFVLESELSLHQQTD) adopts a C2H2-type 2; degenerate zinc-finger fold. 6 C2H2-type zinc fingers span residues 299 to 322 (IQCV…KIVH), 329 to 351 (FSCE…MVAH), 357 to 379 (FTCE…SLQH), 385 to 407 (FRCE…MSIH), 413 to 435 (FMCQ…MKTH), and 441 to 463 (FICE…RRTH). Residues 469–492 (YPCDVCGQRFRFSNMLKAHKEKCF) form a C2H2-type 9; degenerate zinc finger. Residues 498 to 606 (VNVPPAVQIP…AEKNSSAQHH (109 aa)) are mediates interaction with CBFA2T3.

The protein belongs to the krueppel C2H2-type zinc-finger protein family. As to quaternary structure, interacts with CBFA2T3. As to expression, widely expressed with higher expression in breast, prostate, vulva and pancreas.

Its subcellular location is the nucleus. Functionally, functions as a transcriptional repressor. This chain is Zinc finger protein 652 (ZNF652), found in Homo sapiens (Human).